We begin with the raw amino-acid sequence, 125 residues long: MPTINQLVRQGREVETTKSKSPAMQNSPQRRGVCTRVYTTTPKKPNSALRKVAKVRLTNGFEVISYIGGEGHNLQEHSVVLVRGGRVKDLPGVRYHIVRGSLDLQGVKDRKQARSKYGAKKPKAK.

Residues 1 to 31 (MPTINQLVRQGREVETTKSKSPAMQNSPQRR) are disordered. Residues 19–29 (SKSPAMQNSPQ) show a composition bias toward polar residues. Asp89 bears the 3-methylthioaspartic acid mark.

This sequence belongs to the universal ribosomal protein uS12 family. As to quaternary structure, part of the 30S ribosomal subunit. Contacts proteins S8 and S17. May interact with IF1 in the 30S initiation complex.

Its function is as follows. With S4 and S5 plays an important role in translational accuracy. Functionally, interacts with and stabilizes bases of the 16S rRNA that are involved in tRNA selection in the A site and with the mRNA backbone. Located at the interface of the 30S and 50S subunits, it traverses the body of the 30S subunit contacting proteins on the other side and probably holding the rRNA structure together. The combined cluster of proteins S8, S12 and S17 appears to hold together the shoulder and platform of the 30S subunit. The sequence is that of Small ribosomal subunit protein uS12 from Paracidovorax citrulli (strain AAC00-1) (Acidovorax citrulli).